We begin with the raw amino-acid sequence, 556 residues long: Putative protein SPATA31F2P (556 aa).

Disordered stretches follow at residues 133–154 (ALKA…SGSD) and 210–231 (LPKT…WVSP). Positions 144–154 (SGGQDNDSGSD) are enriched in polar residues.

The protein belongs to the SPATA31 family.

In Homo sapiens (Human), this protein is Putative protein SPATA31F2P.